The chain runs to 504 residues: Anaerobic nitric oxide reductase transcription regulator NorR (504 aa).

At Asp57 the chain carries 4-aspartylphosphate. The region spanning 187–416 is the Sigma-54 factor interaction domain; the sequence is MIGLSPGMTQ…LEHAIHRAVV (230 aa). ATP contacts are provided by residues 215–222 and 278–287; these read GETGTGKE and ADNGTLFLDE. Residues 479–498 constitute a DNA-binding region (H-T-H motif); that stretch reads WAACARMLETDVANLHRLAK.

It participates in nitrogen metabolism; nitric oxide reduction. In terms of biological role, required for the expression of anaerobic nitric oxide (NO) reductase, acts as a transcriptional activator for at least the norVW operon. Activation also requires sigma-54. This chain is Anaerobic nitric oxide reductase transcription regulator NorR, found in Escherichia coli O17:K52:H18 (strain UMN026 / ExPEC).